We begin with the raw amino-acid sequence, 239 residues long: Uridylate kinase (239 aa).

13-16 (KLSG) is a binding site for ATP. Glycine 55 contributes to the UMP binding site. ATP contacts are provided by glycine 56 and arginine 60. UMP-binding positions include aspartate 75 and 136–143 (TGNPFFTT). Residues threonine 163, tyrosine 169, and aspartate 172 each coordinate ATP.

Belongs to the UMP kinase family. As to quaternary structure, homohexamer.

The protein localises to the cytoplasm. The enzyme catalyses UMP + ATP = UDP + ADP. It functions in the pathway pyrimidine metabolism; CTP biosynthesis via de novo pathway; UDP from UMP (UMPK route): step 1/1. Its activity is regulated as follows. Inhibited by UTP. Catalyzes the reversible phosphorylation of UMP to UDP. This is Uridylate kinase from Chromobacterium violaceum (strain ATCC 12472 / DSM 30191 / JCM 1249 / CCUG 213 / NBRC 12614 / NCIMB 9131 / NCTC 9757 / MK).